The primary structure comprises 31 residues: Cytochrome b6-f complex subunit 6 (31 aa).

A helical transmembrane segment spans residues Thr-3–Ile-23.

The protein belongs to the PetL family. In terms of assembly, the 4 large subunits of the cytochrome b6-f complex are cytochrome b6, subunit IV (17 kDa polypeptide, PetD), cytochrome f and the Rieske protein, while the 4 small subunits are PetG, PetL, PetM and PetN. The complex functions as a dimer.

Its subcellular location is the plastid. The protein localises to the chloroplast thylakoid membrane. Its function is as follows. Component of the cytochrome b6-f complex, which mediates electron transfer between photosystem II (PSII) and photosystem I (PSI), cyclic electron flow around PSI, and state transitions. PetL is important for photoautotrophic growth as well as for electron transfer efficiency and stability of the cytochrome b6-f complex. The polypeptide is Cytochrome b6-f complex subunit 6 (Abies homolepis (Nikko fir)).